A 217-amino-acid chain; its full sequence is Ribosomal RNA small subunit methyltransferase G (217 aa).

S-adenosyl-L-methionine is bound by residues glycine 79, leucine 84, 130–131, and arginine 148; that span reads IE.

The protein belongs to the methyltransferase superfamily. RNA methyltransferase RsmG family.

The protein resides in the cytoplasm. The catalysed reaction is guanosine(527) in 16S rRNA + S-adenosyl-L-methionine = N(7)-methylguanosine(527) in 16S rRNA + S-adenosyl-L-homocysteine. Its function is as follows. Specifically methylates the N7 position of guanine in position 527 of 16S rRNA. This Desulfotalea psychrophila (strain LSv54 / DSM 12343) protein is Ribosomal RNA small subunit methyltransferase G.